The following is an 84-amino-acid chain: U8-theraphotoxin-Hhn1g (84 aa).

The N-terminal stretch at 1–21 is a signal peptide; sequence MKVVLLVCLVWMMAMMELVSC. 5 disulfides stabilise this stretch: cysteine 23-cysteine 35, cysteine 29-cysteine 44, cysteine 34-cysteine 67, cysteine 54-cysteine 75, and cysteine 69-cysteine 81.

The protein belongs to the AVIT (prokineticin) family. In terms of tissue distribution, expressed by the venom gland.

It localises to the secreted. This chain is U8-theraphotoxin-Hhn1g, found in Cyriopagopus hainanus (Chinese bird spider).